Reading from the N-terminus, the 160-residue chain is Ribosomal RNA large subunit methyltransferase H (160 aa).

Residues leucine 76 and glycine 108 each contribute to the S-adenosyl-L-methionine site.

The protein belongs to the RNA methyltransferase RlmH family. Homodimer.

It is found in the cytoplasm. The enzyme catalyses pseudouridine(1915) in 23S rRNA + S-adenosyl-L-methionine = N(3)-methylpseudouridine(1915) in 23S rRNA + S-adenosyl-L-homocysteine + H(+). Functionally, specifically methylates the pseudouridine at position 1915 (m3Psi1915) in 23S rRNA. The protein is Ribosomal RNA large subunit methyltransferase H of Rhodopseudomonas palustris (strain HaA2).